The chain runs to 1872 residues: E3 ubiquitin-protein ligase UBR2 (1872 aa).

Residues 96-172 form a UBR-type zinc finger; that stretch reads TACTRLCFPS…DAFKCKNELN (77 aa). Residue Lys709 forms a Glycyl lysine isopeptide (Lys-Gly) (interchain with G-Cter in ubiquitin) linkage. The tract at residues 1134–1240 is interaction with UBC2; it reads RYLMETAPHV…SSNTINSCCD (107 aa). Positions 1203-1227 are disordered; it reads NNSVDTSDISTPRTTSPSLSPTRIN. A compositionally biased stretch (low complexity) spans 1212–1225; sequence STPRTTSPSLSPTR. Phosphoserine occurs at positions 1218 and 1222. The RING-type; atypical zinc-finger motif lies at 1241–1362; that stretch reads DDCVFCKMPK…GLIYCPVCNS (122 aa).

This sequence belongs to the E3 ubiquitin-protein ligase UBR1-like family. As to quaternary structure, interacts with MUB1, RPN4 and UBC2.

The protein localises to the cytoplasm. The catalysed reaction is S-ubiquitinyl-[E2 ubiquitin-conjugating enzyme]-L-cysteine + [acceptor protein]-L-lysine = [E2 ubiquitin-conjugating enzyme]-L-cysteine + N(6)-ubiquitinyl-[acceptor protein]-L-lysine.. The protein operates within protein modification; protein ubiquitination. E3 ubiquitin-protein ligase which probably functions outside the N-end rule pathway, since it lacks the residues essential for the degradation of N-end rule substrates. Mediates RPN4 ubiquitination and subsequent degradation. This chain is E3 ubiquitin-protein ligase UBR2 (UBR2), found in Saccharomyces cerevisiae (strain ATCC 204508 / S288c) (Baker's yeast).